A 177-amino-acid chain; its full sequence is uncharacterized protein (177 aa).

This is an uncharacterized protein from Azotobacter chroococcum mcd 1.